Consider the following 162-residue polypeptide: MLLTAEFWVAVAFVAFLVIVWRVGGFSMMTSGLDSRAKRVRHELDEARRLREEAAAVLADYKRRRTEAEREAEAIVAGAREDAERIAAEGHARLNDFVARRTKAAEAKIAQAEAQASAQVRAAAADAAVKVSETLLRERLQGGAAQDLVRASLGDVKSRLQA.

A helical membrane pass occupies residues 1 to 21 (MLLTAEFWVAVAFVAFLVIVW).

Belongs to the ATPase B chain family. In terms of assembly, F-type ATPases have 2 components, F(1) - the catalytic core - and F(0) - the membrane proton channel. F(1) has five subunits: alpha(3), beta(3), gamma(1), delta(1), epsilon(1). F(0) has three main subunits: a(1), b(2) and c(10-14). The alpha and beta chains form an alternating ring which encloses part of the gamma chain. F(1) is attached to F(0) by a central stalk formed by the gamma and epsilon chains, while a peripheral stalk is formed by the delta and b chains.

Its subcellular location is the cell inner membrane. In terms of biological role, f(1)F(0) ATP synthase produces ATP from ADP in the presence of a proton or sodium gradient. F-type ATPases consist of two structural domains, F(1) containing the extramembraneous catalytic core and F(0) containing the membrane proton channel, linked together by a central stalk and a peripheral stalk. During catalysis, ATP synthesis in the catalytic domain of F(1) is coupled via a rotary mechanism of the central stalk subunits to proton translocation. Functionally, component of the F(0) channel, it forms part of the peripheral stalk, linking F(1) to F(0). This chain is ATP synthase subunit b 1, found in Methylorubrum populi (strain ATCC BAA-705 / NCIMB 13946 / BJ001) (Methylobacterium populi).